The following is a 227-amino-acid chain: ATP phosphoribosyltransferase (227 aa).

This sequence belongs to the ATP phosphoribosyltransferase family. Short subfamily. As to quaternary structure, heteromultimer composed of HisG and HisZ subunits.

Its subcellular location is the cytoplasm. The catalysed reaction is 1-(5-phospho-beta-D-ribosyl)-ATP + diphosphate = 5-phospho-alpha-D-ribose 1-diphosphate + ATP. Its pathway is amino-acid biosynthesis; L-histidine biosynthesis; L-histidine from 5-phospho-alpha-D-ribose 1-diphosphate: step 1/9. Its function is as follows. Catalyzes the condensation of ATP and 5-phosphoribose 1-diphosphate to form N'-(5'-phosphoribosyl)-ATP (PR-ATP). Has a crucial role in the pathway because the rate of histidine biosynthesis seems to be controlled primarily by regulation of HisG enzymatic activity. The protein is ATP phosphoribosyltransferase of Bordetella avium (strain 197N).